Reading from the N-terminus, the 765-residue chain is Polyribonucleotide nucleotidyltransferase (765 aa).

Positions 556 and 562 each coordinate Mg(2+). Residues 622–681 enclose the KH domain; sequence PRITKISIPQNKIGEVIGPKGKTINQITEETGANISIEDDGTVFVSAVGGEAAEAAIEKI. The S1 motif domain maps to 693–762; it reads GDRFLGTVVK…NRGKISLVPV (70 aa).

It belongs to the polyribonucleotide nucleotidyltransferase family. Mg(2+) serves as cofactor.

The protein localises to the cytoplasm. It carries out the reaction RNA(n+1) + phosphate = RNA(n) + a ribonucleoside 5'-diphosphate. Functionally, involved in mRNA degradation. Catalyzes the phosphorolysis of single-stranded polyribonucleotides processively in the 3'- to 5'-direction. This is Polyribonucleotide nucleotidyltransferase from Corynebacterium urealyticum (strain ATCC 43042 / DSM 7109).